Reading from the N-terminus, the 398-residue chain is Argininosuccinate synthase (398 aa).

Residue 8-16 (AYSGGLDTS) participates in ATP binding. Tyr87 contributes to the L-citrulline binding site. Gly117 contacts ATP. L-aspartate is bound by residues Thr119, Asn123, and Asp124. An L-citrulline-binding site is contributed by Asn123. 4 residues coordinate L-citrulline: Arg127, Ser175, Glu260, and Tyr272.

The protein belongs to the argininosuccinate synthase family. Type 1 subfamily. As to quaternary structure, homotetramer.

It is found in the cytoplasm. It catalyses the reaction L-citrulline + L-aspartate + ATP = 2-(N(omega)-L-arginino)succinate + AMP + diphosphate + H(+). The protein operates within amino-acid biosynthesis; L-arginine biosynthesis; L-arginine from L-ornithine and carbamoyl phosphate: step 2/3. In Mycobacterium ulcerans (strain Agy99), this protein is Argininosuccinate synthase.